Consider the following 435-residue polypeptide: Adenylosuccinate synthetase (435 aa).

GTP-binding positions include 20 to 26 (GDEGKGK) and 48 to 50 (GHT). Asp-21 serves as the catalytic Proton acceptor. Asp-21 and Gly-48 together coordinate Mg(2+). IMP-binding positions include 21-24 (DEGK), 46-49 (NAGH), Thr-134, Arg-148, Gln-229, Thr-244, and Arg-308. His-49 (proton donor) is an active-site residue. Residue 304-310 (TTTGRPR) coordinates substrate. GTP-binding positions include Arg-310, 336–338 (KVD), and 422–424 (SMG).

The protein belongs to the adenylosuccinate synthetase family. Homodimer. The cofactor is Mg(2+).

Its subcellular location is the cytoplasm. The catalysed reaction is IMP + L-aspartate + GTP = N(6)-(1,2-dicarboxyethyl)-AMP + GDP + phosphate + 2 H(+). It participates in purine metabolism; AMP biosynthesis via de novo pathway; AMP from IMP: step 1/2. Plays an important role in the de novo pathway of purine nucleotide biosynthesis. Catalyzes the first committed step in the biosynthesis of AMP from IMP. The sequence is that of Adenylosuccinate synthetase from Thermoplasma acidophilum (strain ATCC 25905 / DSM 1728 / JCM 9062 / NBRC 15155 / AMRC-C165).